We begin with the raw amino-acid sequence, 287 residues long: Iron-sulfur cluster carrier protein (287 aa).

Position 47–54 (glycine 47–serine 54) interacts with ATP.

It belongs to the Mrp/NBP35 ATP-binding proteins family. Homodimer.

In terms of biological role, binds and transfers iron-sulfur (Fe-S) clusters to target apoproteins. Can hydrolyze ATP. The sequence is that of Iron-sulfur cluster carrier protein from Pseudomonas fragi.